The sequence spans 1049 residues: Self-sufficient cytochrome P450 monooxygenase CYP505E4 (1049 aa).

A heme-binding site is contributed by cysteine 405. The disordered stretch occupies residues 462–492 (ATALSQHNMSAGATSSPGSSAHPAGNKNAQD). The segment covering 471–486 (SAGATSSPGSSAHPAG) has biased composition (low complexity). Residues 499-640 (ISFFYGSNSG…DLEVWEETNL (142 aa)) form the Flavodoxin-like domain. FMN is bound by residues 505–509 (SNSGT) and 584–616 (VFGCGHQDWTKTFYRIPILIDDLMHKAGATRLT). One can recognise an FAD-binding FR-type domain in the interval 678–906 (RDLIEGKVTA…RPAKEAFHLP (229 aa)).

It in the N-terminal section; belongs to the cytochrome P450 family. The cofactor is FAD. Requires FMN as cofactor. Heme serves as cofactor.

It catalyses the reaction 2 oxidized [cytochrome P450] + NADPH = 2 reduced [cytochrome P450] + NADP(+) + H(+). The enzyme catalyses an organic molecule + reduced [NADPH--hemoprotein reductase] + O2 = an alcohol + oxidized [NADPH--hemoprotein reductase] + H2O + H(+). It carries out the reaction dodecanoate + reduced [NADPH--hemoprotein reductase] + O2 = 5-hydroxydodecanoate + oxidized [NADPH--hemoprotein reductase] + H2O + H(+). The catalysed reaction is tetradecanoate + reduced [NADPH--hemoprotein reductase] + O2 = 7-hydroxytetradecanoate + oxidized [NADPH--hemoprotein reductase] + H2O + H(+). It catalyses the reaction dodecan-1-ol + reduced [NADPH--hemoprotein reductase] + O2 = 1,5-dodecanediol + oxidized [NADPH--hemoprotein reductase] + H2O + H(+). The enzyme catalyses dodecan-1-ol + reduced [NADPH--hemoprotein reductase] + O2 = 1,4-dodecanediol + oxidized [NADPH--hemoprotein reductase] + H2O + H(+). It carries out the reaction dodecan-1-ol + reduced [NADPH--hemoprotein reductase] + O2 = 1,6-dodecanediol + oxidized [NADPH--hemoprotein reductase] + H2O + H(+). In terms of biological role, self-sufficient cytochrome P450 monooxygenase that catalyzes the regioselective in-chain hydroxylation of alkanes, fatty alcohols, and fatty acids at the omega-7 position. Performs hydroxylation of C10-C16 n-alkanes and C12 and C14 fatty alcohols; and thereby enables the one step biocatalytic synthesis of rare alcohols such as 5-dodecanol and 7-tetradecanol. Converts 1-dodecanol into 1,5-dodecanediol as major product with very little sub-terminally hydroxylated products with the 1,4-dodecanediol and 1,6-dodecanediol more abundant. Converts dodecanoic acid to 5-hydroxydodecanoic acid which can be further converted into delta-dodecalactone by lactonization of the 5-hydroxy acid at low pH. Also gives sub-terminal hydroxylation of dodecanoic acid with 9-hydroxydodecanoic acid being the second most abundant product. The chain is Self-sufficient cytochrome P450 monooxygenase CYP505E4 from Penicillium freii.